A 411-amino-acid polypeptide reads, in one-letter code: Metal-binding regulatory protein cuf1 (411 aa).

The segment at residues 1–40 (MVVINNVKMACMKCIRGHRSSTCKHNDRELFPIRPKGRPI) is a DNA-binding region (copper-fist). 4 residues coordinate Zn(2+): Cys11, Cys14, Cys23, and His25. Positions 63–92 (SRKKGSKCSTSSTTDLDSSSASNSSCSIPS) are disordered. A compositionally biased stretch (low complexity) spans 69–92 (KCSTSSTTDLDSSSASNSSCSIPS).

The protein resides in the cytoplasm. It is found in the nucleus. Its function is as follows. Copper-sensing transcription factor that regulates iron uptake genes. Under copper starvation conditions activates the transcription of the copper transport genes, ctr4, ctr5 and ctr6. The protein is Metal-binding regulatory protein cuf1 (cuf1) of Schizosaccharomyces pombe (strain 972 / ATCC 24843) (Fission yeast).